Consider the following 402-residue polypeptide: CinA-like protein (402 aa).

This sequence belongs to the CinA family.

The polypeptide is CinA-like protein (Fusobacterium nucleatum subsp. nucleatum (strain ATCC 25586 / DSM 15643 / BCRC 10681 / CIP 101130 / JCM 8532 / KCTC 2640 / LMG 13131 / VPI 4355)).